Here is an 82-residue protein sequence, read N- to C-terminus: ATP synthase subunit c (82 aa).

Transmembrane regions (helical) follow at residues 7–27 and 57–77; these read AASV…PGIG and LAFM…LLFA.

The protein belongs to the ATPase C chain family. In terms of assembly, F-type ATPases have 2 components, F(1) - the catalytic core - and F(0) - the membrane proton channel. F(1) has five subunits: alpha(3), beta(3), gamma(1), delta(1), epsilon(1). F(0) has four main subunits: a(1), b(1), b'(1) and c(10-14). The alpha and beta chains form an alternating ring which encloses part of the gamma chain. F(1) is attached to F(0) by a central stalk formed by the gamma and epsilon chains, while a peripheral stalk is formed by the delta, b and b' chains.

It localises to the cellular thylakoid membrane. Its function is as follows. F(1)F(0) ATP synthase produces ATP from ADP in the presence of a proton or sodium gradient. F-type ATPases consist of two structural domains, F(1) containing the extramembraneous catalytic core and F(0) containing the membrane proton channel, linked together by a central stalk and a peripheral stalk. During catalysis, ATP synthesis in the catalytic domain of F(1) is coupled via a rotary mechanism of the central stalk subunits to proton translocation. Key component of the F(0) channel; it plays a direct role in translocation across the membrane. A homomeric c-ring of between 10-14 subunits forms the central stalk rotor element with the F(1) delta and epsilon subunits. The chain is ATP synthase subunit c from Synechococcus sp. (strain RCC307).